Here is a 344-residue protein sequence, read N- to C-terminus: Tetraacyldisaccharide 4'-kinase (344 aa).

Residue 65–72 (HAGGTGKT) coordinates ATP.

This sequence belongs to the LpxK family.

It carries out the reaction a lipid A disaccharide + ATP = a lipid IVA + ADP + H(+). The protein operates within glycolipid biosynthesis; lipid IV(A) biosynthesis; lipid IV(A) from (3R)-3-hydroxytetradecanoyl-[acyl-carrier-protein] and UDP-N-acetyl-alpha-D-glucosamine: step 6/6. Functionally, transfers the gamma-phosphate of ATP to the 4'-position of a tetraacyldisaccharide 1-phosphate intermediate (termed DS-1-P) to form tetraacyldisaccharide 1,4'-bis-phosphate (lipid IVA). This chain is Tetraacyldisaccharide 4'-kinase, found in Neisseria meningitidis serogroup B (strain ATCC BAA-335 / MC58).